A 131-amino-acid polypeptide reads, in one-letter code: Methylglyoxal synthase (131 aa).

Residues 1–131 (MKIALIAHDK…GDLDYRKLRK (131 aa)) enclose the MGS-like domain. Substrate-binding positions include His-8, Lys-12, 34–37 (TGTT), and 54–55 (SG). Asp-60 functions as the Proton donor/acceptor in the catalytic mechanism. Residue His-87 coordinates substrate.

It belongs to the methylglyoxal synthase family.

The catalysed reaction is dihydroxyacetone phosphate = methylglyoxal + phosphate. Its function is as follows. Catalyzes the formation of methylglyoxal from dihydroxyacetone phosphate. The chain is Methylglyoxal synthase from Bacillus anthracis (strain A0248).